A 550-amino-acid chain; its full sequence is Arginine--tRNA ligase (550 aa).

The 'HIGH' region signature appears at 130 to 140 (ANPTGPIHIGG).

Belongs to the class-I aminoacyl-tRNA synthetase family. In terms of assembly, monomer.

Its subcellular location is the cytoplasm. It carries out the reaction tRNA(Arg) + L-arginine + ATP = L-arginyl-tRNA(Arg) + AMP + diphosphate. The polypeptide is Arginine--tRNA ligase (Mycobacterium sp. (strain JLS)).